The sequence spans 430 residues: Long-chain specific acyl-CoA dehydrogenase, mitochondrial (430 aa).

A mitochondrion-targeting transit peptide spans 1–30; the sequence is MAARLLLRSLRVLKARSAPRPPPSARCSHS. Residues 17–39 are disordered; sequence SAPRPPPSARCSHSGAEARLETP. Lysine 42 carries the N6-acetyllysine modification. Phosphoserine occurs at positions 54 and 55. Residues lysine 66 and lysine 81 each carry the N6-acetyllysine; alternate modification. N6-succinyllysine; alternate is present on residues lysine 66 and lysine 81. N6-acetyllysine is present on residues lysine 92 and lysine 95. Lysine 165 is subject to N6-succinyllysine. FAD is bound at residue 170–179; that stretch reads IAMTEPGAGS. Position 179 (serine 179) interacts with substrate. Position 191 is a phosphoserine (serine 191). 203–205 is a binding site for FAD; it reads FIT. 227–228 contacts substrate; the sequence is AH. At lysine 240 the chain carries N6-succinyllysine. Residues lysine 254 and lysine 279 each carry the N6-acetyllysine; alternate modification. N6-succinyllysine; alternate occurs at positions 254 and 279. Substrate contacts are provided by residues tyrosine 282 and 289–292; that span reads PQER. Glutamate 291 acts as the Proton acceptor in catalysis. Arginine 317 is a binding site for FAD. The residue at position 318 (lysine 318) is an N6-acetyllysine. The residue at position 322 (lysine 322) is an N6-acetyllysine; alternate. Lysine 322 is subject to N6-succinyllysine; alternate. Glutamine 328 contacts FAD. Lysine 358 carries the post-translational modification N6-acetyllysine. Serine 362 carries the post-translational modification Phosphoserine. An FAD-binding site is contributed by 385–389; it reads QLHGG. Residue 412 to 413 participates in substrate binding; that stretch reads GG. Residue 414–416 coordinates FAD; it reads TNE.

The protein belongs to the acyl-CoA dehydrogenase family. Homotetramer. Requires FAD as cofactor. In terms of processing, acetylation at Lys-318 and Lys-322 in proximity of the cofactor-binding sites strongly reduces catalytic activity. These sites are deacetylated by SIRT3. As to expression, expressed in heart, skeletal muscle, kidney, and brain. Expressed in liver (at protein level).

It localises to the mitochondrion matrix. The catalysed reaction is a long-chain 2,3-saturated fatty acyl-CoA + oxidized [electron-transfer flavoprotein] + H(+) = a long-chain (2E)-enoyl-CoA + reduced [electron-transfer flavoprotein]. The enzyme catalyses oxidized [electron-transfer flavoprotein] + hexadecanoyl-CoA + H(+) = (2E)-hexadecenoyl-CoA + reduced [electron-transfer flavoprotein]. It catalyses the reaction hexanoyl-CoA + oxidized [electron-transfer flavoprotein] + H(+) = (2E)-hexenoyl-CoA + reduced [electron-transfer flavoprotein]. It carries out the reaction octanoyl-CoA + oxidized [electron-transfer flavoprotein] + H(+) = (2E)-octenoyl-CoA + reduced [electron-transfer flavoprotein]. The catalysed reaction is decanoyl-CoA + oxidized [electron-transfer flavoprotein] + H(+) = (2E)-decenoyl-CoA + reduced [electron-transfer flavoprotein]. The enzyme catalyses dodecanoyl-CoA + oxidized [electron-transfer flavoprotein] + H(+) = (2E)-dodecenoyl-CoA + reduced [electron-transfer flavoprotein]. It catalyses the reaction tetradecanoyl-CoA + oxidized [electron-transfer flavoprotein] + H(+) = (2E)-tetradecenoyl-CoA + reduced [electron-transfer flavoprotein]. It carries out the reaction octadecanoyl-CoA + oxidized [electron-transfer flavoprotein] + H(+) = (2E)-octadecenoyl-CoA + reduced [electron-transfer flavoprotein]. The catalysed reaction is eicosanoyl-CoA + oxidized [electron-transfer flavoprotein] + H(+) = (2E)-eicosenoyl-CoA + reduced [electron-transfer flavoprotein]. The enzyme catalyses docosanoyl-CoA + oxidized [electron-transfer flavoprotein] + H(+) = (2E)-docosenoyl-CoA + reduced [electron-transfer flavoprotein]. It catalyses the reaction tetracosanoyl-CoA + oxidized [electron-transfer flavoprotein] + H(+) = (2E)-tetracosenoyl-CoA + reduced [electron-transfer flavoprotein]. It carries out the reaction (5E)-tetradecenoyl-CoA + oxidized [electron-transfer flavoprotein] + H(+) = (2E,5E)-tetradecadienoyl-CoA + reduced [electron-transfer flavoprotein]. The catalysed reaction is (5Z)-tetradecenoyl-CoA + oxidized [electron-transfer flavoprotein] + H(+) = (2E,5Z)-tetradecadienoyl-CoA + reduced [electron-transfer flavoprotein]. The enzyme catalyses oxidized [electron-transfer flavoprotein] + (9Z)-octadecenoyl-CoA + H(+) = (2E,9Z)-octadecadienoyl-CoA + reduced [electron-transfer flavoprotein]. Its pathway is lipid metabolism; mitochondrial fatty acid beta-oxidation. Its function is as follows. Long-chain specific acyl-CoA dehydrogenase is one of the acyl-CoA dehydrogenases that catalyze the first step of mitochondrial fatty acid beta-oxidation, an aerobic process breaking down fatty acids into acetyl-CoA and allowing the production of energy from fats. The first step of fatty acid beta-oxidation consists in the removal of one hydrogen from C-2 and C-3 of the straight-chain fatty acyl-CoA thioester, resulting in the formation of trans-2-enoyl-CoA. Among the different mitochondrial acyl-CoA dehydrogenases, long-chain specific acyl-CoA dehydrogenase can act on saturated and unsaturated acyl-CoAs with 6 to 24 carbons with a preference for 8 to 18 carbons long primary chains. This Mus musculus (Mouse) protein is Long-chain specific acyl-CoA dehydrogenase, mitochondrial.